Consider the following 111-residue polypeptide: Large ribosomal subunit protein eL42 (111 aa).

Zn(2+) is bound by residues C12, C15, C72, and C77.

This sequence belongs to the eukaryotic ribosomal protein eL42 family. In terms of assembly, component of the large ribosomal subunit.

The protein localises to the cytoplasm. Functionally, component of the large ribosomal subunit. The ribosome is a large ribonucleoprotein complex responsible for the synthesis of proteins in the cell. The chain is Large ribosomal subunit protein eL42 (RPL36A) from Oryctolagus cuniculus (Rabbit).